Here is a 214-residue protein sequence, read N- to C-terminus: Small ribosomal subunit protein eS6 (214 aa).

This sequence belongs to the eukaryotic ribosomal protein eS6 family.

This is Small ribosomal subunit protein eS6 from Saccharolobus solfataricus (strain ATCC 35092 / DSM 1617 / JCM 11322 / P2) (Sulfolobus solfataricus).